The following is a 505-amino-acid chain: Peroxisome proliferator-activated receptor gamma (505 aa).

Residues 1 to 26 form a disordered region; that stretch reads MGETLGDSLIDPESDSFADTLSASTS. Residues 17–26 show a composition bias toward polar residues; that stretch reads FADTLSASTS. Phosphoserine; by MAPK is present on S112. The nuclear receptor DNA-binding region spans 136 to 210; the sequence is AIECRVCGDK…VGMSHNAIRF (75 aa). 2 NR C4-type zinc fingers span residues 139 to 159 and 176 to 198; these read CRVC…CEGC and CDLN…FQKC. The tract at residues 205-280 is interaction with FAM120B; the sequence is HNAIRFGRMP…DKSPFVIYDM (76 aa). Residues 238–503 enclose the NR LBD domain; sequence DLRALAKHLY…HPLLQEIYKD (266 aa). A Glycyl lysine isopeptide (Lys-Gly) (interchain with G-Cter in ubiquitin) cross-link involves residue K252. Residues 495-503 carry the 9aaTAD motif; it reads PLLQEIYKD.

The protein belongs to the nuclear hormone receptor family. NR1 subfamily. As to quaternary structure, interacts with FOXO1 (acetylated form). Heterodimer with other nuclear receptors, such as RXRA. The heterodimer with the retinoic acid receptor RXRA is called adipocyte-specific transcription factor ARF6. Interacts with NCOA6 coactivator, leading to a strong increase in transcription of target genes. Interacts with coactivator PPARBP, leading to a mild increase in transcription of target genes. Interacts with NOCA7 in a ligand-inducible manner. Interacts with NCOA1 and NCOA2 LXXLL motifs. Interacts with ASXL1, ASXL2, DNTTIP2, FAM120B, MAP2K1/MEK1, NR0B2, PDPK1, PRDM16, PRMT2 and TGFB1I1. Interacts (when activated by agonist) with PPP5C. Interacts with HELZ2 and THRAP3; the interaction stimulates the transcriptional activity of PPARG. Interacts with PER2, the interaction is ligand dependent and blocks PPARG recruitment to target promoters. Interacts with NOCT. Interacts with ACTN4. Interacts (when in the liganded conformation) with GPS2. Interacts with CRY1 and CRY2 in a ligand-dependent manner. In the absence of hormonal ligand, interacts with TACC1. In macrophages, interacts with PAQR3 and STUB1; the interactions promote PPARG poylubiquitination and STUB1-mediated degradation. Phosphorylated at basal conditions and dephosphorylated when treated with the ligand. May be dephosphorylated by PPP5C. The phosphorylated form may be inactive and dephosphorylation induces adipogenic activity. In terms of processing, ubiquitinated by E3 ubiquitin-protein ligase complex containing FBXO9; leading to proteasomal degradation. Ubiquitinated at Lys-252 by TRIM55 leading to proteasomal degradation. Ubiquitinated by E3 ubiquitin-protein ligase STUB1/CHIP; leading to proteasomal degradation.

The protein resides in the nucleus. It localises to the cytoplasm. Its activity is regulated as follows. PDPK1 activates its transcriptional activity independently of its kinase activity. Its function is as follows. Nuclear receptor that binds peroxisome proliferators such as hypolipidemic drugs and fatty acids. Once activated by a ligand, the nuclear receptor binds to DNA specific PPAR response elements (PPRE) and modulates the transcription of its target genes, such as acyl-CoA oxidase. It therefore controls the peroxisomal beta-oxidation pathway of fatty acids. Key regulator of adipocyte differentiation and glucose homeostasis. ARF6 acts as a key regulator of the tissue-specific adipocyte P2 (aP2) enhancer. Acts as a critical regulator of gut homeostasis by suppressing NF-kappa-B-mediated pro-inflammatory responses. Plays a role in the regulation of cardiovascular circadian rhythms by regulating the transcription of BMAL1 in the blood vessels. The sequence is that of Peroxisome proliferator-activated receptor gamma (PPARG) from Canis lupus familiaris (Dog).